The following is a 395-amino-acid chain: Acid ceramidase (395 aa).

A signal peptide spans 1–21 (MPGRSRVALVLLAAAVSCAVA). An intrachain disulfide couples Cys-31 to Cys-340. Cys-143 (nucleophile) is an active-site residue. 4 N-linked (GlcNAc...) asparagine glycosylation sites follow: Asn-195, Asn-259, Asn-286, and Asn-342. Cys-388 and Cys-392 are disulfide-bonded.

This sequence belongs to the acid ceramidase family. Heterodimer; disulfide-linked. The heterodimer is composed of the disulfide-linked alpha and beta chains produced by autocatalytic cleavage of the precursor. Post-translationally, N-glycosylated. In terms of processing, proteolytically cleaved into two chains alpha and beta that remain associated via a disulfide bond. Cleavage gives rise to a conformation change that activates the enzyme. The same catalytic Cys residue mediates the autoproteolytic cleavage and subsequent hydrolysis of lipid substrates. The beta chain may undergo an additional C-terminal processing.

It is found in the lysosome. The protein resides in the secreted. The catalysed reaction is an N-acylsphing-4-enine + H2O = sphing-4-enine + a fatty acid. It catalyses the reaction N-dodecanoylsphing-4-enine + H2O = dodecanoate + sphing-4-enine. The enzyme catalyses N-tetradecanoylsphing-4-enine + H2O = tetradecanoate + sphing-4-enine. It carries out the reaction N-hexadecanoylsphing-4-enine + H2O = sphing-4-enine + hexadecanoate. The catalysed reaction is N-octadecanoylsphing-4-enine + H2O = sphing-4-enine + octadecanoate. It catalyses the reaction N-dodecanoyl-(4R)-hydroxysphinganine + H2O = (4R)-hydroxysphinganine + dodecanoate. The enzyme catalyses N-(dodecanoyl)-sphinganine + H2O = dodecanoate + sphinganine. It carries out the reaction N-(acetyl)-sphing-4-enine + H2O = sphing-4-enine + acetate. The catalysed reaction is N-(hexanoyl)sphing-4-enine + H2O = hexanoate + sphing-4-enine. It catalyses the reaction N-octanoylsphing-4-enine + H2O = octanoate + sphing-4-enine. The enzyme catalyses N-(9Z-octadecenoyl)-sphing-4-enine + H2O = sphing-4-enine + (9Z)-octadecenoate. It carries out the reaction N-dodecanoylethanolamine + H2O = dodecanoate + ethanolamine. Its pathway is lipid metabolism; sphingolipid metabolism. In terms of biological role, lysosomal ceramidase that hydrolyzes sphingolipid ceramides into sphingosine and free fatty acids at acidic pH. Ceramides, sphingosine, and its phosphorylated form sphingosine-1-phosphate are bioactive lipids that mediate cellular signaling pathways regulating several biological processes including cell proliferation, apoptosis and differentiation. Has a higher catalytic efficiency towards C12-ceramides versus other ceramides. Also catalyzes the reverse reaction allowing the synthesis of ceramides from fatty acids and sphingosine. For the reverse synthetic reaction, the natural sphingosine D-erythro isomer is more efficiently utilized as a substrate compared to D-erythro-dihydrosphingosine and D-erythro-phytosphingosine, while the fatty acids with chain lengths of 12 or 14 carbons are the most efficiently used. Also has an N-acylethanolamine hydrolase activity. By regulating the levels of ceramides, sphingosine and sphingosine-1-phosphate in the epidermis, mediates the calcium-induced differentiation of epidermal keratinocytes. Also indirectly regulates tumor necrosis factor/TNF-induced apoptosis. By regulating the intracellular balance between ceramides and sphingosine, in adrenocortical cells, probably also acts as a regulator of steroidogenesis. The polypeptide is Acid ceramidase (Pan troglodytes (Chimpanzee)).